Reading from the N-terminus, the 314-residue chain is uncharacterized protein (314 aa).

Composition is skewed to basic residues over residues 1-16 (MAGN…KAGT) and 49-65 (AAKR…RRPA). A disordered region spans residues 1 to 73 (MAGNSKRRGA…PARKTDETEL (73 aa)). The S-adenosyl-L-methionine site is built by Gly266, Ile286, and Leu295.

The protein belongs to the class IV-like SAM-binding methyltransferase superfamily. RNA methyltransferase TrmH family.

This is an uncharacterized protein from Mycobacterium sp. (strain KMS).